The primary structure comprises 461 residues: Glutamate--tRNA ligase (461 aa).

The short motif at P8–G18 is the 'HIGH' region element. The 'KMSKS' region motif lies at K240–R244. K243 is an ATP binding site.

The protein belongs to the class-I aminoacyl-tRNA synthetase family. Glutamate--tRNA ligase type 1 subfamily. As to quaternary structure, monomer.

It localises to the cytoplasm. The catalysed reaction is tRNA(Glu) + L-glutamate + ATP = L-glutamyl-tRNA(Glu) + AMP + diphosphate. In terms of biological role, catalyzes the attachment of glutamate to tRNA(Glu) in a two-step reaction: glutamate is first activated by ATP to form Glu-AMP and then transferred to the acceptor end of tRNA(Glu). This Chromobacterium violaceum (strain ATCC 12472 / DSM 30191 / JCM 1249 / CCUG 213 / NBRC 12614 / NCIMB 9131 / NCTC 9757 / MK) protein is Glutamate--tRNA ligase.